The primary structure comprises 95 residues: Large ribosomal subunit protein bL25 (95 aa).

Belongs to the bacterial ribosomal protein bL25 family. As to quaternary structure, part of the 50S ribosomal subunit; part of the 5S rRNA/L5/L18/L25 subcomplex. Contacts the 5S rRNA. Binds to the 5S rRNA independently of L5 and L18.

Its function is as follows. This is one of the proteins that binds to the 5S RNA in the ribosome where it forms part of the central protuberance. The sequence is that of Large ribosomal subunit protein bL25 from Yersinia enterocolitica serotype O:8 / biotype 1B (strain NCTC 13174 / 8081).